A 164-amino-acid chain; its full sequence is Putative deoxyuridine 5'-triphosphate nucleotidohydrolase (164 aa).

Substrate is bound at residue 65–67 (RSG). N6-acetyllysine; by host is present on lysine 71. Substrate is bound by residues 79–82 (GVVD), glycine 90, and 138–139 (YG).

This sequence belongs to the dUTPase family. Mg(2+) is required as a cofactor.

It catalyses the reaction dUTP + H2O = dUMP + diphosphate + H(+). Its function is as follows. This enzyme is involved in nucleotide metabolism: it produces dUMP, the immediate precursor of thymidine nucleotides and it decreases the intracellular concentration of dUTP so that uracil cannot be incorporated into DNA. The polypeptide is Putative deoxyuridine 5'-triphosphate nucleotidohydrolase (Dryophytes versicolor (chameleon treefrog)).